We begin with the raw amino-acid sequence, 72 residues long: Nod factor export ATP-binding protein I (72 aa).

It belongs to the ABC transporter superfamily. Lipooligosaccharide exporter (TC 3.A.1.102) family. The complex is composed of two ATP-binding proteins (NodI) and two transmembrane proteins (NodJ).

The protein resides in the cell inner membrane. Part of the ABC transporter complex NodIJ involved in the export of the nodulation factors (Nod factors), the bacterial signal molecules that induce symbiosis and subsequent nodulation induction. Nod factors are LCO (lipo-chitin oligosaccharide), a modified beta-1,4-linked N-acetylglucosamine oligosaccharide. This subunit is responsible for energy coupling to the transport system. The chain is Nod factor export ATP-binding protein I from Rhizobium leguminosarum bv. trifolii.